The chain runs to 465 residues: A-type ATP synthase subunit B (465 aa).

It belongs to the ATPase alpha/beta chains family. As to quaternary structure, has multiple subunits with at least A(3), B(3), C, D, E, F, H, I and proteolipid K(x).

Its subcellular location is the cell membrane. In terms of biological role, component of the A-type ATP synthase that produces ATP from ADP in the presence of a proton gradient across the membrane. The B chain is a regulatory subunit. In Sulfurisphaera tokodaii (strain DSM 16993 / JCM 10545 / NBRC 100140 / 7) (Sulfolobus tokodaii), this protein is A-type ATP synthase subunit B.